Here is a 356-residue protein sequence, read N- to C-terminus: uncharacterized protein (356 aa).

The next 6 helical transmembrane spans lie at 2-22, 36-56, 77-97, 99-119, 124-144, and 154-174; these read FEAI…FHRL, YVTV…VPIF, MFYT…IGDY, IITA…GPFL, IISL…LSLI, and LFLI…FVDI. The GGDEF domain maps to 218 to 353; sequence QSLGLLLIDI…GRNQVMFNPI (136 aa).

It is found in the cell membrane. This is an uncharacterized protein from Staphylococcus saprophyticus subsp. saprophyticus (strain ATCC 15305 / DSM 20229 / NCIMB 8711 / NCTC 7292 / S-41).